A 290-amino-acid polypeptide reads, in one-letter code: Eukaryotic translation initiation factor 3 subunit F-2 (290 aa).

The MPN domain maps to 12 to 150 (VRLQPLVLFQ…TRLYCGVTMG (139 aa)).

Belongs to the eIF-3 subunit F family. In terms of assembly, component of the eukaryotic translation initiation factor 3 (eIF-3) complex. The eIF-3 complex interacts with pix.

It is found in the cytoplasm. Functionally, component of the eukaryotic translation initiation factor 3 (eIF-3) complex, which is involved in protein synthesis of a specialized repertoire of mRNAs and, together with other initiation factors, stimulates binding of mRNA and methionyl-tRNAi to the 40S ribosome. The eIF-3 complex specifically targets and initiates translation of a subset of mRNAs involved in cell proliferation. This chain is Eukaryotic translation initiation factor 3 subunit F-2, found in Drosophila virilis (Fruit fly).